The chain runs to 473 residues: Phosphatidylserine synthase 1 (473 aa).

Ala2 is subject to N-acetylalanine. The Cytoplasmic portion of the chain corresponds to 2–35; it reads ASCVGSRTLSKDDVNYKMHFRMINEQQVEDITID. A helical transmembrane segment spans residues 36–56; the sequence is FFYRPHTITLLSFTIVSLMYF. Topologically, residues 57 to 72 are lumenal; it reads AFTRDDSVPEDNIWRG. Residues 73-93 form a helical membrane-spanning segment; the sequence is ILSVIFFFLIISVLAFPNGPF. At 94 to 102 the chain is on the cytoplasmic side; sequence TRPHPALWR. The helical transmembrane segment at 103-123 threads the bilayer; that stretch reads MVFGLSVLYFLFLVFLLFLNF. Topologically, residues 124–186 are lumenal; the sequence is EQVKSLMYWL…AMKALLIRSY (63 aa). A helical membrane pass occupies residues 187–207; sequence GLCWTISITWELTELFFMHLL. Over 208–216 the chain is Cytoplasmic; it reads PNFAECWWD. The helical transmembrane segment at 217–237 threads the bilayer; the sequence is QVILDILLCNGGGIWLGMVVC. Residues 238–286 lie on the Lumenal side of the membrane; the sequence is RFLEMRTYHWASFKDIHTTTGKIKRAVLQFTPASWTYVRWFDPKSSFQR. A helical transmembrane segment spans residues 287–307; the sequence is VAGIYLFMIIWQLTELNTFFL. At 308–319 the chain is on the cytoplasmic side; sequence KHIFVFQASHPL. A helical transmembrane segment spans residues 320 to 342; sequence SWCRILFIGGITAPTVRQYYAYL. Over 343–355 the chain is Lumenal; it reads TDTQCKRVGTQCW. The helical transmembrane segment at 356–376 threads the bilayer; it reads VFGVIGFLEAIVCIKFGQDLF. The Cytoplasmic portion of the chain corresponds to 377–383; the sequence is SKTQILY. A helical membrane pass occupies residues 384–404; it reads VVLWLLCVAFTTFLCLYGMVW. Residues 405–473 are Lumenal-facing; sequence YAEHYGHREK…SKVTNGVGKK (69 aa). Phosphoserine occurs at positions 417, 425, and 454. Positions 427 to 473 are disordered; sequence DISWPHGKGSKGSEDGPHKHPGNSESHSSRRRNRHSKSKVTNGVGKK. Basic residues predominate over residues 455-464; sequence SRRRNRHSKS.

It belongs to the phosphatidyl serine synthase family.

Its subcellular location is the endoplasmic reticulum membrane. The catalysed reaction is a 1,2-diacyl-sn-glycero-3-phosphoethanolamine + L-serine = a 1,2-diacyl-sn-glycero-3-phospho-L-serine + ethanolamine. The enzyme catalyses a 1,2-diacyl-sn-glycero-3-phosphocholine + L-serine = a 1,2-diacyl-sn-glycero-3-phospho-L-serine + choline. It participates in phospholipid metabolism; phosphatidylserine biosynthesis. Catalyzes a base-exchange reaction in which the polar head group of phosphatidylethanolamine (PE) or phosphatidylcholine (PC) is replaced by L-serine. Catalyzes mainly the conversion of phosphatidylcholine but also converts, in vitro and to a lesser extent, phosphatidylethanolamine. The chain is Phosphatidylserine synthase 1 (PTDSS1) from Bos taurus (Bovine).